The primary structure comprises 259 residues: Phosphatidylglycerol--prolipoprotein diacylglyceryl transferase (259 aa).

Transmembrane regions (helical) follow at residues 9–29 (IIFSIGPLAISWYSLSYVIGI), 55–75 (FITYAVIGIIVGGRLGFVLLY), 92–112 (EGGMSFHGGALGGIITAYLFC), and 117–137 (INFLSLTDIIAPVVPIGLFLG). Arg-138 is an a 1,2-diacyl-sn-glycero-3-phospho-(1'-sn-glycerol) binding site. Transmembrane regions (helical) follow at residues 172–192 (QLYEAFFEGLVLFSILAYTTF), 201–221 (GLNSGIFFTFYGLFRITIEIF), and 228–248 (IGFILDSLTMGQILSVPMLLL).

Belongs to the Lgt family.

It localises to the cell inner membrane. It catalyses the reaction L-cysteinyl-[prolipoprotein] + a 1,2-diacyl-sn-glycero-3-phospho-(1'-sn-glycerol) = an S-1,2-diacyl-sn-glyceryl-L-cysteinyl-[prolipoprotein] + sn-glycerol 1-phosphate + H(+). It participates in protein modification; lipoprotein biosynthesis (diacylglyceryl transfer). Its function is as follows. Catalyzes the transfer of the diacylglyceryl group from phosphatidylglycerol to the sulfhydryl group of the N-terminal cysteine of a prolipoprotein, the first step in the formation of mature lipoproteins. The sequence is that of Phosphatidylglycerol--prolipoprotein diacylglyceryl transferase from Rickettsia africae (strain ESF-5).